Reading from the N-terminus, the 210-residue chain is Thiamine-phosphate synthase (210 aa).

Residues 36 to 40 (QLREK) and asparagine 68 each bind 4-amino-2-methyl-5-(diphosphooxymethyl)pyrimidine. The Mg(2+) site is built by aspartate 69 and aspartate 88. Position 107 (serine 107) interacts with 4-amino-2-methyl-5-(diphosphooxymethyl)pyrimidine. 133–135 (TGS) serves as a coordination point for 2-[(2R,5Z)-2-carboxy-4-methylthiazol-5(2H)-ylidene]ethyl phosphate. Lysine 136 is a binding site for 4-amino-2-methyl-5-(diphosphooxymethyl)pyrimidine. 2-[(2R,5Z)-2-carboxy-4-methylthiazol-5(2H)-ylidene]ethyl phosphate-binding positions include glycine 164 and 184–185 (IS).

This sequence belongs to the thiamine-phosphate synthase family. Mg(2+) is required as a cofactor.

The catalysed reaction is 2-[(2R,5Z)-2-carboxy-4-methylthiazol-5(2H)-ylidene]ethyl phosphate + 4-amino-2-methyl-5-(diphosphooxymethyl)pyrimidine + 2 H(+) = thiamine phosphate + CO2 + diphosphate. It carries out the reaction 2-(2-carboxy-4-methylthiazol-5-yl)ethyl phosphate + 4-amino-2-methyl-5-(diphosphooxymethyl)pyrimidine + 2 H(+) = thiamine phosphate + CO2 + diphosphate. It catalyses the reaction 4-methyl-5-(2-phosphooxyethyl)-thiazole + 4-amino-2-methyl-5-(diphosphooxymethyl)pyrimidine + H(+) = thiamine phosphate + diphosphate. The protein operates within cofactor biosynthesis; thiamine diphosphate biosynthesis; thiamine phosphate from 4-amino-2-methyl-5-diphosphomethylpyrimidine and 4-methyl-5-(2-phosphoethyl)-thiazole: step 1/1. Its function is as follows. Condenses 4-methyl-5-(beta-hydroxyethyl)thiazole monophosphate (THZ-P) and 2-methyl-4-amino-5-hydroxymethyl pyrimidine pyrophosphate (HMP-PP) to form thiamine monophosphate (TMP). The polypeptide is Thiamine-phosphate synthase (Moorella thermoacetica (strain ATCC 39073 / JCM 9320)).